Reading from the N-terminus, the 421-residue chain is Synaptotagmin-12 (421 aa).

Topologically, residues 1–18 (MAVDVTEYHLSVIKSPPG) are vesicular. The helical transmembrane segment at 19–39 (WEVGVYAAGALALLGIAAVSL) threads the bilayer. Residues 40–421 (WKLWTSGSFP…VSMWHPVRRN (382 aa)) are Cytoplasmic-facing. S97 is subject to Phosphoserine; by PKA. 2 positions are modified to phosphoserine: S99 and S214. 2 C2 domains span residues 152–272 (TLGQ…SGWL) and 283–416 (AVGE…SMWH).

The protein belongs to the synaptotagmin family. Homodimer. Can also form heterodimers. Interacts with SYT1. In terms of processing, phosphorylation of Ser-97 is required for mossy-fiber long-term potentiation. Expressed in the brain, specifically by neurons in the hippocampus, and in the adrenal medulla (at protein level).

It localises to the cytoplasmic vesicle. It is found in the secretory vesicle. The protein localises to the synaptic vesicle membrane. Synaptic vesicle phosphoprotein that enhances spontaneous neurotransmitter release but does not effect induced neurotransmitter release. Unlike other synaptotagmins, it does not bind Ca(2+) or phospholipids. Essential for mossy-fiber long-term potentiation in the hippocampus. This chain is Synaptotagmin-12, found in Mus musculus (Mouse).